A 207-amino-acid chain; its full sequence is Large ribosomal subunit protein uL4 (207 aa).

The disordered stretch occupies residues Lys-50–Gly-76.

It belongs to the universal ribosomal protein uL4 family. As to quaternary structure, part of the 50S ribosomal subunit.

Its function is as follows. One of the primary rRNA binding proteins, this protein initially binds near the 5'-end of the 23S rRNA. It is important during the early stages of 50S assembly. It makes multiple contacts with different domains of the 23S rRNA in the assembled 50S subunit and ribosome. Forms part of the polypeptide exit tunnel. The sequence is that of Large ribosomal subunit protein uL4 from Rickettsia typhi (strain ATCC VR-144 / Wilmington).